The primary structure comprises 132 residues: D-ribose pyranase (132 aa).

The active-site Proton donor is the histidine 20. Substrate contacts are provided by residues aspartate 28, histidine 99, and 121–123 (YSN).

This sequence belongs to the RbsD / FucU family. RbsD subfamily. In terms of assembly, homodecamer.

It is found in the cytoplasm. It catalyses the reaction beta-D-ribopyranose = beta-D-ribofuranose. It functions in the pathway carbohydrate metabolism; D-ribose degradation; D-ribose 5-phosphate from beta-D-ribopyranose: step 1/2. Functionally, catalyzes the interconversion of beta-pyran and beta-furan forms of D-ribose. The chain is D-ribose pyranase from Pseudomonas putida (strain GB-1).